A 294-amino-acid chain; its full sequence is Cytidine deaminase (294 aa).

CMP/dCMP-type deaminase domains are found at residues 48–168 (DEDA…FGPK) and 186–294 (LTGD…VLLG). 89-91 (NME) contacts substrate. H102 contributes to the Zn(2+) binding site. Residue E104 is the Proton donor of the active site. Zn(2+) is bound by residues C129 and C132.

This sequence belongs to the cytidine and deoxycytidylate deaminase family. In terms of assembly, homodimer. It depends on Zn(2+) as a cofactor.

The catalysed reaction is cytidine + H2O + H(+) = uridine + NH4(+). The enzyme catalyses 2'-deoxycytidine + H2O + H(+) = 2'-deoxyuridine + NH4(+). Functionally, this enzyme scavenges exogenous and endogenous cytidine and 2'-deoxycytidine for UMP synthesis. The protein is Cytidine deaminase of Salmonella paratyphi A (strain ATCC 9150 / SARB42).